The sequence spans 228 residues: Prolactin-2A1 (228 aa).

The N-terminal stretch at 1–28 (MQLSVTHPCCRTLILLLVSNLLLWESEA) is a signal peptide. Intrachain disulfides connect Cys87-Cys203 and Cys220-Cys228.

The protein belongs to the somatotropin/prolactin family. As to expression, expressed specifically in the placenta. Expression restricted to the junctional zone of the chorioallantoic placenta.

It is found in the secreted. The sequence is that of Prolactin-2A1 (Prl2a1) from Mus musculus (Mouse).